The chain runs to 186 residues: Elongation factor P (186 aa).

This sequence belongs to the elongation factor P family.

The protein localises to the cytoplasm. The protein operates within protein biosynthesis; polypeptide chain elongation. In terms of biological role, involved in peptide bond synthesis. Stimulates efficient translation and peptide-bond synthesis on native or reconstituted 70S ribosomes in vitro. Probably functions indirectly by altering the affinity of the ribosome for aminoacyl-tRNA, thus increasing their reactivity as acceptors for peptidyl transferase. In Neisseria meningitidis serogroup A / serotype 4A (strain DSM 15465 / Z2491), this protein is Elongation factor P.